The primary structure comprises 424 residues: Glutamate-1-semialdehyde 2,1-aminomutase (424 aa).

Lys-268 carries the N6-(pyridoxal phosphate)lysine modification.

Belongs to the class-III pyridoxal-phosphate-dependent aminotransferase family. HemL subfamily. Pyridoxal 5'-phosphate serves as cofactor.

It is found in the cytoplasm. It carries out the reaction (S)-4-amino-5-oxopentanoate = 5-aminolevulinate. It participates in porphyrin-containing compound metabolism; protoporphyrin-IX biosynthesis; 5-aminolevulinate from L-glutamyl-tRNA(Glu): step 2/2. This Methanosarcina acetivorans (strain ATCC 35395 / DSM 2834 / JCM 12185 / C2A) protein is Glutamate-1-semialdehyde 2,1-aminomutase.